We begin with the raw amino-acid sequence, 49 residues long: Splenin (49 aa).

Residues 4–47 (LEDPSVLTKEKLKSELVANNVTLPAGEQRKEVYVELYLQHLTAL) form the LEM-like domain. Residues 32 to 36 (RKEVY) form an essential for biological activity region.

It belongs to the thymopoietin family.

Its function is as follows. Hormone of the spleen with pleiotropic actions on prothymocytes, mature T-cells, the nicotinic acetylcholine receptor, and pituitary corticotrophs. The sequence is that of Splenin (SP) from Bos taurus (Bovine).